The chain runs to 143 residues: Competence protein ComGD (143 aa).

Residues 1–10 constitute a propeptide that is removed on maturation; the sequence is MNIKLNEEKG. At Phe-11 the chain carries N-methylphenylalanine. Residues 11-31 traverse the membrane as a helical segment; it reads FTLLESLLVLSLASILLVAVF.

The transformation pili are flexible filaments, consisting mainly of the major pilin ComGC and smaller amounts of the minor pilins, including at least ComGD, ComGF and ComGG. Interacts with ComGF. Interacts with ComGG. Processing of ComGD in competent cells requires ComC.

Its subcellular location is the cell membrane. It is found in the cell surface. Functionally, required for formation of the type IV-like pilus (T4P) that plays a role in transformation. Transformation pili are dynamically extended and retracted, perhaps thereby promoting DNA uptake and transformation. Required for transformation and DNA binding. The protein is Competence protein ComGD (comGD) of Bacillus subtilis (strain 168).